Here is a 185-residue protein sequence, read N- to C-terminus: Ribosome-recycling factor (185 aa).

The protein belongs to the RRF family.

It is found in the cytoplasm. In terms of biological role, responsible for the release of ribosomes from messenger RNA at the termination of protein biosynthesis. May increase the efficiency of translation by recycling ribosomes from one round of translation to another. The protein is Ribosome-recycling factor of Clostridium acetobutylicum (strain ATCC 824 / DSM 792 / JCM 1419 / IAM 19013 / LMG 5710 / NBRC 13948 / NRRL B-527 / VKM B-1787 / 2291 / W).